We begin with the raw amino-acid sequence, 308 residues long: Homoserine kinase (308 aa).

Residue 85–95 (PLTRGLGSSAA) coordinates ATP.

This sequence belongs to the GHMP kinase family. Homoserine kinase subfamily.

The protein localises to the cytoplasm. The catalysed reaction is L-homoserine + ATP = O-phospho-L-homoserine + ADP + H(+). Its pathway is amino-acid biosynthesis; L-threonine biosynthesis; L-threonine from L-aspartate: step 4/5. Its function is as follows. Catalyzes the ATP-dependent phosphorylation of L-homoserine to L-homoserine phosphate. This Caldicellulosiruptor saccharolyticus (strain ATCC 43494 / DSM 8903 / Tp8T 6331) protein is Homoserine kinase.